Here is a 295-residue protein sequence, read N- to C-terminus: Bis(5'-nucleosyl)-tetraphosphatase, symmetrical (295 aa).

Positions 271-295 (LSIEHPRHTHTPRRKAKKRHKRSPK) are disordered. Residues 277 to 295 (RHTHTPRRKAKKRHKRSPK) show a composition bias toward basic residues.

The protein belongs to the Ap4A hydrolase family.

The enzyme catalyses P(1),P(4)-bis(5'-adenosyl) tetraphosphate + H2O = 2 ADP + 2 H(+). In terms of biological role, hydrolyzes diadenosine 5',5'''-P1,P4-tetraphosphate to yield ADP. The sequence is that of Bis(5'-nucleosyl)-tetraphosphatase, symmetrical from Xylella fastidiosa (strain M23).